The primary structure comprises 390 residues: MPDWLLTLLITVVKAVAVILALLTTFAYMTLVERKLLGRFQIRVGPNRVGPMGLLQPAADAIKSIFKEDLQVTLADKLVYTLAPIIAIGMALTAFGGIPAGPEGSLFGENPWVYNLDAGVLALLALTSMGVYGIFLGGWASGSKYPMLGGLRSSAQMISYELGMGLSILGLLMLVGSTRFTDIVLWQGANGWMILFQSLGFALFLISSFAETNRTPFDLVEAEQELVAGYLTEYSAIKWALFQMAEYVNMITASALMSTLFFGGWRGPGFLNGIIPGIADIPILWLVVKIGFFLFVFIWVRATLPRLRYDQLMRFGWKLLLPLALFNTMLVAGYIAFFSSWGWWPLALLSLLGLTALLALSDTVRQLWNAPMTRRETELPPVPTRSAGGD.

The next 9 helical transmembrane spans lie at 4–24 (WLLTLLITVVKAVAVILALLT), 78–98 (LVYTLAPIIAIGMALTAFGGI), 120–140 (VLALLALTSMGVYGIFLGGWA), 157–177 (MISYELGMGLSILGLLMLVGS), 191–211 (GWMILFQSLGFALFLISSFAE), 247–266 (YVNMITASALMSTLFFGGWR), 278–298 (IADIPILWLVVKIGFFLFVFI), 315–337 (FGWKLLLPLALFNTMLVAGYIAF), and 341–360 (WGWWPLALLSLLGLTALLAL).

It belongs to the complex I subunit 1 family. As to quaternary structure, NDH-1 is composed of 15 different subunits. Subunits NuoA, H, J, K, L, M, N constitute the membrane sector of the complex.

The protein localises to the cell membrane. It carries out the reaction a quinone + NADH + 5 H(+)(in) = a quinol + NAD(+) + 4 H(+)(out). Functionally, NDH-1 shuttles electrons from NADH, via FMN and iron-sulfur (Fe-S) centers, to quinones in the respiratory chain. The immediate electron acceptor for the enzyme in this species is believed to be ubiquinone. Couples the redox reaction to proton translocation (for every two electrons transferred, four hydrogen ions are translocated across the cytoplasmic membrane), and thus conserves the redox energy in a proton gradient. This subunit may bind ubiquinone. This chain is NADH-quinone oxidoreductase subunit H, found in Deinococcus deserti (strain DSM 17065 / CIP 109153 / LMG 22923 / VCD115).